The sequence spans 330 residues: Calponin-3 (330 aa).

An N6-acetyllysine modification is found at K23. Residues 26 to 130 (QQAEEDLRNW…TLVALAGLAK (105 aa)) enclose the Calponin-homology (CH) domain. An N6-methyllysine modification is found at K158. Calponin-like repeat units follow at residues 164 to 189 (IGLQMGTNKCASQAGMTAYGTRRHLY), 204 to 229 (ISLQMGTNKGASQAGMSAPGTRRDIY), and 243 to 268 (ISLQMGTNKVASQKGMSVYGLGRQVY). A disordered region spans residues 279–330 (PVIHNGSQGTGTNGSEISDSDYQAEYPDEYHGEYPDEYPREYQYGDDQGIDY). A compositionally biased stretch (basic and acidic residues) spans 306 to 318 (DEYHGEYPDEYPR).

Belongs to the calponin family.

Its function is as follows. Thin filament-associated protein that is implicated in the regulation and modulation of smooth muscle contraction. It is capable of binding to actin, calmodulin and tropomyosin. The interaction of calponin with actin inhibits the actomyosin Mg-ATPase activity. The protein is Calponin-3 (Cnn3) of Rattus norvegicus (Rat).